A 427-amino-acid chain; its full sequence is MTEAMKITLSTQPADARWGEKATYSINNDGITLHLNGADDLGLIQRAARKIDGLGIKHVQLSGEGWDADRCWAFWQGYKGPKGTRKVEWPDLDDAQRQELDNRLMIIDWVRDTINAPAEELGPSQLAQRAVDLISNVAGDRVTYRITKGEDLREQGYMGLHTVGRGSERSPVLLALDYNPTGDKEAPVYACLVGKGITFDSGGYSIKQTAFMDSMKSDMGGAATVTGALAFAITRGLNKRVKLFLCCADNLISGNAFKLGDIITYRNGKKVEVMNTDAEGRLVLADGLIDASAQKPEMIIDAATLTGAAKTALGNDYHALFSFDDALAGRLLASASQENEPFWRLPLAEFHRSQLPSNFAELNNTGSAAYPAGASTAAGFLSHFVENYQQGWLHIDCSATYRKAPVEQWSAGATGLGVRTIANLLTA.

Mn(2+) contacts are provided by Lys-195 and Asp-200. Lys-207 is a catalytic residue. Positions 218, 277, and 279 each coordinate Mn(2+). The active site involves Arg-281.

It belongs to the peptidase M17 family. As to quaternary structure, homohexamer. The cofactor is Mn(2+).

It localises to the cytoplasm. The enzyme catalyses Release of an N-terminal amino acid, Xaa, from a peptide or arylamide. Xaa is preferably Glu or Asp but may be other amino acids, including Leu, Met, His, Cys and Gln.. Functionally, probably plays an important role in intracellular peptide degradation. The polypeptide is Peptidase B (Shigella flexneri serotype 5b (strain 8401)).